Consider the following 165-residue polypeptide: Nucleotide-binding protein A9601_05361 (165 aa).

It belongs to the YajQ family.

In terms of biological role, nucleotide-binding protein. The sequence is that of Nucleotide-binding protein A9601_05361 from Prochlorococcus marinus (strain AS9601).